The following is a 400-amino-acid chain: Sensory histidine kinase/phosphatase NtrB (400 aa).

Composition is skewed to low complexity over residues 1–10 (MARASAAAPL) and 18–27 (RAPSSSYRPV). The disordered stretch occupies residues 1–27 (MARASAAAPLPRRPARPRAPSSSYRPV). Positions 29 to 99 (PCIDPSVMLN…IEQVQQGRHR (71 aa)) constitute a PAS domain. One can recognise a Histidine kinase domain in the interval 163-381 (MLGHEVKNPL…VFKVSLPMFD (219 aa)). At histidine 166 the chain carries Phosphohistidine; by autocatalysis.

Autophosphorylated.

The protein localises to the cytoplasm. It catalyses the reaction ATP + protein L-histidine = ADP + protein N-phospho-L-histidine.. Its function is as follows. Member of the two-component regulatory system NtrB/NtrC, which controls expression of the nitrogen-regulated (ntr) genes in response to nitrogen limitation. Under conditions of nitrogen limitation, NtrB autophosphorylates and transfers the phosphoryl group to NtrC. In the presence of nitrogen, acts as a phosphatase that dephosphorylates and inactivates NtrC. This chain is Sensory histidine kinase/phosphatase NtrB, found in Azospirillum brasilense.